Reading from the N-terminus, the 237-residue chain is Early nodulin-like protein 1 (237 aa).

A signal peptide spans 1–28; sequence MEASRRWPYAAWFMAVLGLVAVFSSSEA. Residues 29-134 form the Phytocyanin domain; the sequence is YVFYAGGRDG…GQKLYIIVMA (106 aa). Residue Asn59 is glycosylated (N-linked (GlcNAc...) asparagine). A disulfide bridge connects residues Cys85 and Cys122. Residues 139 to 215 form a disordered region; it reads KPSEAPEPAG…SLGAPPPTSG (77 aa). 2 stretches are compositionally biased toward low complexity: residues 140-152 and 201-215; these read PSEA…AAGP and MSRS…PTSG. Ser206 is lipidated: GPI-anchor amidated serine. Positions 207 to 237 are cleaved as a propeptide — removed in mature form; that stretch reads LGAPPPTSGAAGLAGVVASVVVGVLGALLMF.

This sequence belongs to the early nodulin-like (ENODL) family. In terms of tissue distribution, expressed ubiquitously. Accumulates particularly in reproductive tissues, especially in maturing seeds.

Its subcellular location is the vacuole. It is found in the aleurone grain membrane. May act as a carbohydrate transporter. The protein is Early nodulin-like protein 1 of Oryza sativa subsp. japonica (Rice).